Reading from the N-terminus, the 115-residue chain is MNPLIQSLTEGQLRTDIPSFRPGDTVRVHAKVVEGNRERIQIFEGVVISRKGQGISEMYTVRKISGGVGVERTFPIHTPRVDKIEVVRYGKVRRAKLYYLRALQGKAARIKEIRR.

This sequence belongs to the bacterial ribosomal protein bL19 family.

Functionally, this protein is located at the 30S-50S ribosomal subunit interface and may play a role in the structure and function of the aminoacyl-tRNA binding site. In Streptococcus suis (strain 98HAH33), this protein is Large ribosomal subunit protein bL19.